An 874-amino-acid chain; its full sequence is MAAKKSGASKELSPMMRQYLDVKKQYADYLLLFRVGDFYETFFDDAATISAAVNIVLTRRSNGSAPDIPMAGFPYHASEGYIARLVRKGFKVAVCEQVEDPAEAKGIVKREITEIVTPGVTYSDSILEDRHNNYLAAVAFLKEGRTPVAGIAYLDVTTAEFRIASLPPHSLRDTILSLGPAELLVSSSEKSRLEDLVRGYATGMLVTGLDDWMFSEEQAETVLSRQFRTHSLKGFGIEGNRAGRVAAGVVLQYLDETRQSRRAYITRISEMQGGEFMTLDLQTKRNLEIVSSMQDGSPHGSLLQVMDRTVNPMGARLIRRWLQRPLRVAEAIAERHDGVEELLQSSELSEGVRCSLSEINDLERSLARIATFRTSPREVLQMGRSLAVFPQLRDLLLPALSARLRSLAAVLQPLPELVSEIERSVDPECGATVRDGGYIRSGCNDELDELRSVSSMAKERLMDIQREEREKTGISSLKVQYNRVFGYYIEISRANLDRVPEGYMKKQTLVNAERYTIPALKAYEEKILNAEERSLRLEAEIFQALCASIAERAASIQESALAIAEIDTLASFALSAKEYGYCKPEMKEHEGLLITEGRHPVLERIMKPDEPFVKNDCHFDGQQRMLMITGPNMAGKSSYLRQTGLIVLLAQAGSFVPAERAEIGMVDRIFTRVGASDNLASGESTFLVEMNEAASILNNATSSSLILLDEIGRGTSTFDGMSIAWSMSEYIITRLGARTLFATHYHELSELEERLPGVVNYNATVVESGERVIFLRKIVRGSTDNSYGIEVARMAGMPNEVIERAREIMSGLERKDVSFADRSFSVQENMQISLFDEVDSRLKTALQDLDLERLTPIEALLELEKLQKLLRGHS.

Residue 630-637 (GPNMAGKS) participates in ATP binding.

The protein belongs to the DNA mismatch repair MutS family.

Functionally, this protein is involved in the repair of mismatches in DNA. It is possible that it carries out the mismatch recognition step. This protein has a weak ATPase activity. In Chlorobium phaeovibrioides (strain DSM 265 / 1930) (Prosthecochloris vibrioformis (strain DSM 265)), this protein is DNA mismatch repair protein MutS.